The following is a 284-amino-acid chain: MAAFTTKQSLLLLSLLLLISLSAGSFYDNFDITWGNGRANIVESGQLLTCTLDKISGSGFQSKKEYLFGKIDMKMKLVAGNSAGTVTAYYLSSKGETWDEIDFEFLGNVTGQPYVLHTNVFTGGKGNREMQFYLWFDPTADFHTYTVLWNPLNIIFLVDGIPIRVFKNNEANGVAYPKSQPMKIYSSLWEADDWATQGGKVKTDWTNAPFSASYKSFNDVDCCSRTSLLNWVTCNANSNSWMWTTLNSNQYGQMKWVQDDYMIYNYCTDFKRFPQGLPTECNLN.

A signal peptide spans methionine 1–glycine 24. The 190-residue stretch at serine 25–tyrosine 214 folds into the GH16 domain. Residue glutamate 100 is the Nucleophile of the active site. The Proton donor role is filled by glutamate 104. Glutamate 104 is a xyloglucan binding site. N-linked (GlcNAc...) asparagine glycosylation occurs at asparagine 108. Xyloglucan is bound by residues histidine 117–asparagine 119, asparagine 127–glutamate 129, aspartate 193–tryptophan 194, and glycine 198. 2 disulfides stabilise this stretch: cysteine 223/cysteine 234 and cysteine 267/cysteine 281. Xyloglucan is bound at residue arginine 272.

This sequence belongs to the glycosyl hydrolase 16 family. XTH group 2 subfamily. In terms of processing, contains at least one intrachain disulfide bond essential for its enzymatic activity.

It localises to the secreted. The protein localises to the cell wall. The protein resides in the extracellular space. It is found in the apoplast. The catalysed reaction is breaks a beta-(1-&gt;4) bond in the backbone of a xyloglucan and transfers the xyloglucanyl segment on to O-4 of the non-reducing terminal glucose residue of an acceptor, which can be a xyloglucan or an oligosaccharide of xyloglucan.. In terms of biological role, may catalyze xyloglucan endohydrolysis (XEH) and/or endotransglycosylation (XET). Cleaves and religates xyloglucan polymers, an essential constituent of the primary cell wall, and thereby participates in cell wall construction of growing tissues. This is Putative xyloglucan endotransglucosylase/hydrolase protein 13 (XTH13) from Arabidopsis thaliana (Mouse-ear cress).